We begin with the raw amino-acid sequence, 178 residues long: Cytidylate kinase (178 aa).

ATP is bound at residue 7-15 (GLPGSGTTS).

It belongs to the cytidylate kinase family. Type 2 subfamily.

Its subcellular location is the cytoplasm. It catalyses the reaction CMP + ATP = CDP + ADP. The enzyme catalyses dCMP + ATP = dCDP + ADP. The protein is Cytidylate kinase of Methanospirillum hungatei JF-1 (strain ATCC 27890 / DSM 864 / NBRC 100397 / JF-1).